The chain runs to 909 residues: Tubulin polyglutamylase TTLL7 (909 aa).

The 353-residue stretch at 40-392 (NGAITANVVG…RASDKKKNLA (353 aa)) folds into the TTL domain. Residues Lys-162, 168-169 (MG), 190-193 (QEYL), and 203-205 (KFD) each bind ATP. Arg-229 contributes to the L-glutamate binding site. 251-252 (TN) lines the ATP pocket. 3 residues coordinate L-glutamate: Tyr-253, Ser-254, and Lys-273. Positions 338, 351, and 353 each coordinate Mg(2+). L-glutamate is bound at residue Lys-369. Residues 390–452 (NLAKQKAEAQ…ISREEYENRH (63 aa)) are c-MTBD region. 2 disordered regions span residues 517-580 (DEKL…KVSY) and 603-688 (KAAR…PSIS). The segment covering 518–531 (EKLSGKPTRPKEPR) has biased composition (basic and acidic residues). Residues 532–542 (TLSSMPESTQT) are compositionally biased toward polar residues. A compositionally biased stretch (low complexity) spans 548 to 562 (NYSSHSSSNSTGSSS). A compositionally biased stretch (basic and acidic residues) spans 571–580 (KEGKEKKVSY). The span at 604–625 (AARPFSNSSSPSSAASMRRSVS) shows a compositional bias: low complexity. Positions 626 to 657 (CPRSITALNTQSPTTDQRPFSSRISSTITRPL) are enriched in polar residues. Residues 658–673 (SGNRTNSLNRSSSSNR) are compositionally biased toward low complexity. The span at 674-688 (VPQSGTSGSVYPSIS) shows a compositional bias: polar residues.

It belongs to the tubulin--tyrosine ligase family. As to quaternary structure, interacts with both alpha- and beta-tubulin (via C-terminal tubulin tails). Requires Mg(2+) as cofactor.

Its subcellular location is the cell projection. The protein localises to the cilium. It localises to the cytoplasm. The protein resides in the cytoskeleton. It is found in the cilium basal body. Its subcellular location is the dendrite. The protein localises to the perikaryon. It catalyses the reaction L-glutamyl-[protein] + L-glutamate + ATP = gamma-L-glutamyl-L-glutamyl-[protein] + ADP + phosphate + H(+). The enzyme catalyses (L-glutamyl)(n)-gamma-L-glutamyl-L-glutamyl-[protein] + L-glutamate + ATP = (L-glutamyl)(n+1)-gamma-L-glutamyl-L-glutamyl-[protein] + ADP + phosphate + H(+). Polyglutamylase which modifies tubulin, generating polyglutamate side chains of variable lengths on the gamma-carboxyl group of specific glutamate residues within the C-terminal tail of tubulin. Mediates both ATP-dependent initiation and elongation steps of the polyglutamylation reaction. Preferentially modifies the beta-tubulin tail over an alpha-tail. Competes with monoglycylase TTLL3 for modification site on beta-tubulin substrate, thereby creating an anticorrelation between glycylation and glutamylation reactions. This chain is Tubulin polyglutamylase TTLL7, found in Xenopus tropicalis (Western clawed frog).